The following is a 100-amino-acid chain: Aspartyl/glutamyl-tRNA(Asn/Gln) amidotransferase subunit C (100 aa).

The protein belongs to the GatC family. Heterotrimer of A, B and C subunits.

It carries out the reaction L-glutamyl-tRNA(Gln) + L-glutamine + ATP + H2O = L-glutaminyl-tRNA(Gln) + L-glutamate + ADP + phosphate + H(+). The enzyme catalyses L-aspartyl-tRNA(Asn) + L-glutamine + ATP + H2O = L-asparaginyl-tRNA(Asn) + L-glutamate + ADP + phosphate + 2 H(+). Allows the formation of correctly charged Asn-tRNA(Asn) or Gln-tRNA(Gln) through the transamidation of misacylated Asp-tRNA(Asn) or Glu-tRNA(Gln) in organisms which lack either or both of asparaginyl-tRNA or glutaminyl-tRNA synthetases. The reaction takes place in the presence of glutamine and ATP through an activated phospho-Asp-tRNA(Asn) or phospho-Glu-tRNA(Gln). The polypeptide is Aspartyl/glutamyl-tRNA(Asn/Gln) amidotransferase subunit C (Streptococcus pyogenes serotype M18 (strain MGAS8232)).